The sequence spans 283 residues: MPPAPAIVRTLPSLRRALERLRARRGTIALVPTMGALHEGHLALVRQAKRRASRVIVSIFVNPTQFAPHEDFGSYPRTWKADLAKLAEAKTDLIWRPDVSTMYPRDFATRISTEGPAIARLEDHFRPHFFGGVTTVVGKLFIQCRPDVALFGQKDYQQLKVVTRMVADLDLGVKIVGVPIVREPDGLAMSSRNVYLSNEQRARAPTLYRTLKDAAGRLRNGDHLEAVMADGARTIEDTGFSLDYFEARHAETLSPVGSLKDGPVRLLVAAKIGDTRLIDNLGV.

An ATP-binding site is contributed by 34–41 (MGALHEGH). Catalysis depends on H41, which acts as the Proton donor. Residue Q65 coordinates (R)-pantoate. Beta-alanine is bound at residue Q65. Residue 152-155 (GQKD) coordinates ATP. Q158 serves as a coordination point for (R)-pantoate. ATP contacts are provided by residues V181 and 189–192 (MSSR).

The protein belongs to the pantothenate synthetase family. In terms of assembly, homodimer.

It is found in the cytoplasm. It catalyses the reaction (R)-pantoate + beta-alanine + ATP = (R)-pantothenate + AMP + diphosphate + H(+). It participates in cofactor biosynthesis; (R)-pantothenate biosynthesis; (R)-pantothenate from (R)-pantoate and beta-alanine: step 1/1. In terms of biological role, catalyzes the condensation of pantoate with beta-alanine in an ATP-dependent reaction via a pantoyl-adenylate intermediate. This chain is Pantothenate synthetase, found in Nitrobacter winogradskyi (strain ATCC 25391 / DSM 10237 / CIP 104748 / NCIMB 11846 / Nb-255).